A 232-amino-acid chain; its full sequence is Proteasome subunit alpha (232 aa).

This sequence belongs to the peptidase T1A family. The 20S proteasome core is composed of 14 alpha and 14 beta subunits that assemble into four stacked heptameric rings, resulting in a barrel-shaped structure. The two inner rings, each composed of seven catalytic beta subunits, are sandwiched by two outer rings, each composed of seven alpha subunits. The catalytic chamber with the active sites is on the inside of the barrel. Has a gated structure, the ends of the cylinder being occluded by the N-termini of the alpha-subunits. Is capped by the proteasome-associated ATPase, ARC.

The protein resides in the cytoplasm. It participates in protein degradation; proteasomal Pup-dependent pathway. The formation of the proteasomal ATPase ARC-20S proteasome complex, likely via the docking of the C-termini of ARC into the intersubunit pockets in the alpha-rings, may trigger opening of the gate for substrate entry. Interconversion between the open-gate and close-gate conformations leads to a dynamic regulation of the 20S proteasome proteolysis activity. Component of the proteasome core, a large protease complex with broad specificity involved in protein degradation. This chain is Proteasome subunit alpha, found in Acidimicrobium ferrooxidans (strain DSM 10331 / JCM 15462 / NBRC 103882 / ICP).